A 217-amino-acid chain; its full sequence is Histone H1C (217 aa).

Composition is skewed to low complexity over residues 1–11 (MAETASTETTP) and 28–45 (KKAA…PSAS). Disordered regions lie at residues 1-45 (MAET…PSAS) and 123-217 (VAKK…AAKK). Residues 40-113 (SGPSASELIV…GASGSFKLNK (74 aa)) enclose the H15 domain. Composition is skewed to basic residues over residues 123-151 (VAKK…KPKK) and 159-217 (SPKK…AAKK).

Belongs to the histone H1/H5 family.

The protein resides in the nucleus. It is found in the chromosome. Histones H1 are necessary for the condensation of nucleosome chains into higher-order structures. The polypeptide is Histone H1C (Xenopus laevis (African clawed frog)).